The chain runs to 242 residues: Derlin-1 (242 aa).

Over 1–20 (MSSPAEYYNSLPPISKAYGT) the chain is Cytoplasmic. The chain crosses the membrane as a helical span at residues 21–41 (LCFFATVLCQLQILNPPFLAL). Topologically, residues 42–55 (YYPFVFKKFQIWRL) are lumenal. A helical transmembrane segment spans residues 56-76 (FTSFFFLGKFSINFGIRLLMI). The Cytoplasmic portion of the chain corresponds to 77-94 (ARYGVQLEKGAFEKRTAD). The chain crosses the membrane as a helical span at residues 95 to 115 (FLWMMIFGAISLLALSAIPFL). Over 116–157 (DIYFLGVPMVSMLLYVWSREYPNSQISMYGLVQLRSFYLPWA) the chain is Lumenal. Residues 158 to 178 (MLGLDVIFGSEILPGLLGILV) traverse the membrane as a helical segment. The Cytoplasmic portion of the chain corresponds to 179–242 (GHTYYFLSVL…FRGRSYRLSQ (64 aa)).

This sequence belongs to the derlin family. In terms of tissue distribution, seedling shoots and roots.

The protein resides in the endoplasmic reticulum membrane. Functionally, may be involved in the degradation process of specific misfolded endoplasmic reticulum (ER) luminal proteins. The polypeptide is Derlin-1 (DER1) (Oryza sativa subsp. japonica (Rice)).